A 920-amino-acid polypeptide reads, in one-letter code: 2-oxoadipate dehydrogenase complex component E1 (920 aa).

N6-succinyllysine is present on residues lysine 183 and lysine 188. The tract at residues 299 to 318 (GKTRGRQQSQEDGDYSPNGS) is disordered. Lysine 800 and lysine 818 each carry N6-succinyllysine.

This sequence belongs to the alpha-ketoglutarate dehydrogenase family. As to quaternary structure, the 2-oxoadipate dehydrogenase complex is composed of OADH (2-oxoadipate dehydrogenase; E1a), DLST (dihydrolipoamide succinyltransferase; E2) and DLD (dihydrolipoamide dehydrogenase; E3). E1a functional unit is a dimer. The cofactor is thiamine diphosphate.

It localises to the mitochondrion. It carries out the reaction N(6)-[(R)-lipoyl]-L-lysyl-[protein] + 2-oxoadipate + H(+) = N(6)-[(R)-S(8)-glutaryldihydrolipoyl]-L-lysyl-[protein] + CO2. Its pathway is amino-acid degradation. Functionally, 2-oxoadipate dehydrogenase (E1a) component of the 2-oxoadipate dehydrogenase complex (OADHC). Participates in the first step, rate limiting for the overall conversion of 2-oxoadipate (alpha-ketoadipate) to glutaryl-CoA and CO(2) catalyzed by the whole OADHC. Catalyzes the irreversible decarboxylation of 2-oxoadipate via the thiamine diphosphate (ThDP) cofactor and subsequent transfer of the decarboxylated acyl intermediate on an oxidized dihydrolipoyl group that is covalently amidated to the E2 enzyme (dihydrolipoyllysine-residue succinyltransferase or DLST). Can catalyze the decarboxylation of 2-oxoglutarate in vitro, but at a much lower rate than 2-oxoadipate. Responsible for the last step of L-lysine, L-hydroxylysine and L-tryptophan catabolism with the common product being 2-oxoadipate. This is 2-oxoadipate dehydrogenase complex component E1 (Dhtkd1) from Rattus norvegicus (Rat).